The sequence spans 119 residues: Ribonuclease P protein component (119 aa).

It belongs to the RnpA family. In terms of assembly, consists of a catalytic RNA component (M1 or rnpB) and a protein subunit.

It carries out the reaction Endonucleolytic cleavage of RNA, removing 5'-extranucleotides from tRNA precursor.. RNaseP catalyzes the removal of the 5'-leader sequence from pre-tRNA to produce the mature 5'-terminus. It can also cleave other RNA substrates such as 4.5S RNA. The protein component plays an auxiliary but essential role in vivo by binding to the 5'-leader sequence and broadening the substrate specificity of the ribozyme. The protein is Ribonuclease P protein component of Bacillus cereus (strain ATCC 14579 / DSM 31 / CCUG 7414 / JCM 2152 / NBRC 15305 / NCIMB 9373 / NCTC 2599 / NRRL B-3711).